Consider the following 360-residue polypeptide: S-adenosylmethionine-dependent nucleotide dehydratase RSAD2 (360 aa).

The interval 44 to 71 (KGQPRVRGEPKETQETHEDPGSAQPTTP) is disordered. The span at 49 to 63 (VRGEPKETQETHEDP) shows a compositional bias: basic and acidic residues. Residues 68-288 (PTTPVSVNYH…LQRHKDVSCL (221 aa)) form the Radical SAM core domain. [4Fe-4S] cluster is bound by residues Cys82, Cys86, and Cys89. Residue Lys196 is modified to N6-acetyllysine. A Glycyl lysine isopeptide (Lys-Gly) (interchain with G-Cter in ubiquitin) cross-link involves residue Lys205.

Belongs to the radical SAM superfamily. RSAD2 family. In terms of assembly, homodimer. Interacts with IRAK1 and TRAF6. Interacts with FPPS. Interacts with HADHB. Interacts (via C-terminus) with VAPA/VAP33 (via C-terminus). The cofactor is [4Fe-4S] cluster. In terms of processing, acetylated by HAT1. HAT1-mediated acetylation of Lys-196 in turn recruits UBE4A that stimulates RSAD2 polyubiquitination leading to proteasomal degradation. Post-translationally, 'Lys-6'-linked polyubiquitination at Lys-205 leads to RSAD2 protein degradation. As to expression, in neonatal rat tibia, specifically localized in cells of the periosteum, in osteoblasts lining endosteal and peristeal bone surfaces, to articular surfaces of cartilage and in perichondral cells but not in chondrocytes (at protein level). Expressed predominantly in bone marrow and spleen.

The protein resides in the endoplasmic reticulum membrane. It is found in the golgi apparatus. Its subcellular location is the endoplasmic reticulum. It localises to the lipid droplet. The protein localises to the mitochondrion. The protein resides in the mitochondrion inner membrane. It is found in the mitochondrion outer membrane. The enzyme catalyses CTP + AH2 + S-adenosyl-L-methionine = 3'-deoxy-3',4'-didehydro-CTP + 5'-deoxyadenosine + L-methionine + A + H2O + H(+). With respect to regulation, IRAK1 and TRAF6 synergistically activate RSAD2 increasing its activity with CTP as substrate about 10-fold. Functionally, interferon-inducible antiviral protein which plays a major role in the cell antiviral state induced by type I and type II interferon. Catalyzes the conversion of cytidine triphosphate (CTP) to 3'-deoxy-3',4'-didehydro-CTP (ddhCTP) via a SAM-dependent radical mechanism. In turn, ddhCTP acts as a chain terminator for the RNA-dependent RNA polymerases from multiple viruses and directly inhibits viral replication. Therefore, inhibits a wide range of DNA and RNA viruses. Also promotes TLR7 and TLR9-dependent production of IFN-beta production in plasmacytoid dendritic cells (pDCs) by facilitating 'Lys-63'-linked ubiquitination of IRAK1 by TRAF6. Plays a role in CD4+ T-cells activation and differentiation. Facilitates T-cell receptor (TCR)-mediated GATA3 activation and optimal T-helper 2 (Th2) cytokine production by modulating NFKB1 and JUNB activities. Can inhibit secretion of soluble proteins. The chain is S-adenosylmethionine-dependent nucleotide dehydratase RSAD2 from Rattus norvegicus (Rat).